Here is a 47-residue protein sequence, read N- to C-terminus: Small ribosomal subunit protein uS14 (47 aa).

Residues Cys-12, Cys-15, Cys-30, and Cys-33 each coordinate Zn(2+).

Belongs to the universal ribosomal protein uS14 family. Zinc-binding uS14 subfamily. As to quaternary structure, part of the 30S ribosomal subunit. The cofactor is Zn(2+).

Its function is as follows. Binds 16S rRNA, required for the assembly of 30S particles. The chain is Small ribosomal subunit protein uS14 from Methanosphaera stadtmanae (strain ATCC 43021 / DSM 3091 / JCM 11832 / MCB-3).